Reading from the N-terminus, the 260-residue chain is MLPYIGHNSYQQHQFPLPEMEIPEKWKLSYEQEAITAPACPRCASSNTKFCYYNNYSLSQPRYFCKGCRRYWTKGGSLRNIPVGGGCRKRSRSRQNSHKRFGRNENRPDGLINQDDGFQSSPPGSDIDLAAVFAQYVTDRSPSSTDNTTGSDQDSPITTTTHALESLSWDICQETDVDLGFYGEFNNLTQKTKEDQEVFGQFLQEDREEIFEFQGLLDDKEIQEILECSFSEEPDQLVSQGSFMINGDNWSSTDLTRFGI.

The Dof-type zinc-finger motif lies at 38-92 (PACPRCASSNTKFCYYNNYSLSQPRYFCKGCRRYWTKGGSLRNIPVGGGCRKRSR). Zn(2+) contacts are provided by Cys40, Cys43, Cys65, and Cys68. The disordered stretch occupies residues 83-124 (VGGGCRKRSRSRQNSHKRFGRNENRPDGLINQDDGFQSSPPG). Basic residues predominate over residues 87 to 101 (CRKRSRSRQNSHKRF).

The protein localises to the nucleus. Its function is as follows. Transcription factor that binds specifically to a 5'-AA[AG]G-3' consensus core sequence. The sequence is that of Dof zinc finger protein DOF1.2 (DOF1.2) from Arabidopsis thaliana (Mouse-ear cress).